Reading from the N-terminus, the 387-residue chain is Succinate--CoA ligase [ADP-forming] subunit beta (387 aa).

The region spanning 9-243 is the ATP-grasp domain; the sequence is KEILSTYGIP…YSQLDPLEIT (235 aa). ATP-binding positions include Lys-45, 52 to 54, Glu-98, Val-101, and Glu-106; that span reads GRG. Residues Asn-198 and Asp-212 each coordinate Mg(2+). Substrate-binding positions include Asn-263 and 320-322; that span reads GIM.

Belongs to the succinate/malate CoA ligase beta subunit family. In terms of assembly, heterotetramer of two alpha and two beta subunits. The cofactor is Mg(2+).

The enzyme catalyses succinate + ATP + CoA = succinyl-CoA + ADP + phosphate. It carries out the reaction GTP + succinate + CoA = succinyl-CoA + GDP + phosphate. Its pathway is carbohydrate metabolism; tricarboxylic acid cycle; succinate from succinyl-CoA (ligase route): step 1/1. Functionally, succinyl-CoA synthetase functions in the citric acid cycle (TCA), coupling the hydrolysis of succinyl-CoA to the synthesis of either ATP or GTP and thus represents the only step of substrate-level phosphorylation in the TCA. The beta subunit provides nucleotide specificity of the enzyme and binds the substrate succinate, while the binding sites for coenzyme A and phosphate are found in the alpha subunit. This Trichlorobacter lovleyi (strain ATCC BAA-1151 / DSM 17278 / SZ) (Geobacter lovleyi) protein is Succinate--CoA ligase [ADP-forming] subunit beta.